We begin with the raw amino-acid sequence, 251 residues long: Probable-ribose 5-phosphate isomerase (251 aa).

This sequence belongs to the ribose 5-phosphate isomerase family.

The catalysed reaction is aldehydo-D-ribose 5-phosphate = D-ribulose 5-phosphate. It participates in carbohydrate degradation; pentose phosphate pathway; D-ribose 5-phosphate from D-ribulose 5-phosphate (non-oxidative stage): step 1/1. In Caenorhabditis elegans, this protein is Probable-ribose 5-phosphate isomerase (rpia-1).